The primary structure comprises 430 residues: Asparagine--tRNA ligase (430 aa).

This sequence belongs to the class-II aminoacyl-tRNA synthetase family. As to quaternary structure, homodimer.

It localises to the cytoplasm. The catalysed reaction is tRNA(Asn) + L-asparagine + ATP = L-asparaginyl-tRNA(Asn) + AMP + diphosphate + H(+). This Listeria innocua serovar 6a (strain ATCC BAA-680 / CLIP 11262) protein is Asparagine--tRNA ligase.